Here is a 712-residue protein sequence, read N- to C-terminus: Voltage-gated chloride channel TMC4 (712 aa).

The segment at 1-39 is disordered; it reads MEENPTLESEAWGSSRGWLAPREARGAPCSSPGPSLSSV. The Extracellular segment spans residues 1 to 168; that stretch reads MEENPTLESE…GTESYFSLLR (168 aa). An N-linked (GlcNAc...) asparagine glycan is attached at N107. A helical transmembrane segment spans residues 169-189; sequence FLLLLNVLASVLMACMTLLPT. At 190 to 249 the chain is on the cytoplasmic side; sequence WLGGAPPGPPGPDISSPCGSYNPHSQGLVTFATQLFNLLSGEGYLEWSPLFYGFYPPRPR. Residues 250–270 form a helical membrane-spanning segment; sequence LAVTYLCWAFAVGLICLLLIL. The Extracellular portion of the chain corresponds to 271 to 348; it reads HRSVSGLKQT…GQQARVWLVR (78 aa). A helical membrane pass occupies residues 349–369; the sequence is VLLNLLVVALLGAAFYGVYWA. At 370–394 the chain is on the cytoplasmic side; that stretch reads TGCTVELQEMPLVQELPLLKLGVNY. A helical membrane pass occupies residues 395–415; sequence LPSIFIAGVNFVLPPVFKLIA. Residues 416 to 425 are Extracellular-facing; sequence PLEGYTRSRQ. Residues 426–446 form a helical membrane-spanning segment; the sequence is IVFILLRTVFLRLASLVVLLF. The Cytoplasmic portion of the chain corresponds to 447-483; it reads SLWNQITCGGDSEAEDCKTCGYNYKQLPCWETVLGQE. Residues 484–504 form a helical membrane-spanning segment; that stretch reads MYKLLLFDLLTVLAVALLIQF. The Extracellular segment spans residues 505 to 542; that stretch reads PRKLLCGLCPGALGRLAGTQEFQVPDEVLGLIYAQTVV. A helical membrane pass occupies residues 543-565; sequence WVGSFFCPLLPLLNTVKFLLLFY. Over 566–592 the chain is Cytoplasmic; sequence LKKLTLFSTCSPAARTFRASAANFFFP. A helical transmembrane segment spans residues 593–613; that stretch reads LVLLLGLAISSVPLLYSIFLI. Residues 614–654 are Extracellular-facing; sequence PPSKLCGPFRGQSSIWAQIPESISSLPETTQNFLFFLGTQA. The chain crosses the membrane as a helical span at residues 655–677; the sequence is FAVPLLLISSILMAYTVALANSY. Residues 678–712 are Cytoplasmic-facing; sequence GRLISELKRQRQTEAQNKVFLARRAVALTSTKPAL.

Belongs to the TMC family.

It is found in the membrane. The catalysed reaction is chloride(in) = chloride(out). In terms of biological role, voltage-gated chloride channel involved in high-concentration salt taste sensation. Depolarization induced by high NaCl concentration may trigger the activation of TMC4-mediated chloride influx into taste bud cells, helping the return to resting potential. Also allows permeation of organic anions including gluconate, but their current amplitudes at positive potentials are less than that of chloride. Involved in pH and temperature-dependent modulation of salty taste. The chain is Voltage-gated chloride channel TMC4 from Homo sapiens (Human).